Here is a 363-residue protein sequence, read N- to C-terminus: Dioxygenase sphC (363 aa).

3 residues coordinate Fe cation: histidine 183, aspartate 185, and histidine 259.

The protein belongs to the PhyH family. Homodimer. Fe cation is required as a cofactor.

The enzyme catalyses sphingofungin B1 + 2-oxoglutarate + O2 = sphingofungin B + succinate + CO2. It participates in secondary metabolite biosynthesis. Functionally, dioxygenase; part of the gene cluster that mediates the biosynthesis of sphingofungins, bioactive molecules acting as sphingolipid inhibitors via inhibiting serine palmitoyl transferase (SPT). Within the pathway, sphC catalyzes the hydrolxylation at C-4 to convert sphingofungin B1 into sphingofungin B as well as presphingofungin into sphingofungin B2. Sphingofungin biosynthesis starts with the PKS sphB that produces an C18 polyketide precursor 3-hydroxyoctadeca-4,10-dienoyl-ACP containing one delta-6 desaturation and one delta-12 desaturation. The aminoacyl transferase sphA uses the sphB product to produce 3-keto-presphingofungin by adding an aminomalonate molecule. SphF then reduces the C-3 ketone of 3-keto-presphingofungin which leads to presphingofungin. The cytochrome P450 monooxygenase sphH converts presphingofungin into sphingofungin B1 which is further converted to sphingofungin B by the dioxygenase sphC. SphC is also able to convert presphingofungin into sphingofungin B2. The acetyltransferase sphE acetylates sphingofungin B to produce sphingofungin C, but can also convert sphingofungin B1 into sphingofungin C1 and sphingofungin B2 into sphingofungin C2. Finally, sphingofungin C can be spontaneously converted into sphingofungin D. In Aspergillus fumigatus (strain CBS 144.89 / FGSC A1163 / CEA10) (Neosartorya fumigata), this protein is Dioxygenase sphC.